We begin with the raw amino-acid sequence, 388 residues long: Small ribosomal subunit protein uS3m (388 aa).

It belongs to the universal ribosomal protein uS3 family.

It is found in the mitochondrion. Functionally, essential for mitochondrial protein synthesis and required for the maturation of small ribosomal subunits. The sequence is that of Small ribosomal subunit protein uS3m (VAR1) from Kluyveromyces lactis (strain ATCC 8585 / CBS 2359 / DSM 70799 / NBRC 1267 / NRRL Y-1140 / WM37) (Yeast).